A 376-amino-acid chain; its full sequence is Multicilin (376 aa).

Positions 165-213 (EQYWRDVADHNQKALGDALVENNQLQVSLTEKQEEIASLKEKNIQLNEL) form a coiled coil. The interval 230–261 (ERPKHSSGATQGRLPVKRSLEDFYPQSNEPDS) is disordered. The segment at 331-376 (TELEEDVSFRTSIKEHSTIRTLAFPQGNAFTIRTAAGGYKFRWVPN) is TIRT domain.

Belongs to the geminin family. In terms of assembly, component of the EDM complex, at least composed of e2f4, e2f5, mcidas and tfdp1.

The protein localises to the nucleus. Functionally, transcription regulator specifically required for multiciliate cell differentiation. Acts in a multiprotein complex containing e2f4 and e2f5 that binds and activate genes required for centriole biogenesis. Activates genes required for centriole assembly (plk4, cep152) and genes specifically required for motile cilia formation (foxj1). Also promotes the deuterosome pathway of centriole biogenesis by activating expression of deup1, but not its paralog cep63. The sequence is that of Multicilin (mcidas) from Xenopus tropicalis (Western clawed frog).